A 110-amino-acid chain; its full sequence is Large ribosomal subunit protein P2 (110 aa).

Residue serine 59 is modified to O-(pantetheine 4'-phosphoryl)serine; in acyl carrier protein form. Residues 62-110 are disordered; the sequence is LASVPSGGAAPAAAAGGAAAGGAAEEKAEDKPAEKDEESDDDMGFGLFD. Low complexity predominate over residues 63-84; the sequence is ASVPSGGAAPAAAAGGAAAGGA. Over residues 85–95 the composition is skewed to basic and acidic residues; that stretch reads AEEKAEDKPAE. Serine 100 is modified (phosphoserine; in ribosomal stalk form).

This sequence belongs to the eukaryotic ribosomal protein P1/P2 family. The phosphorylated form is part of the ribosomal stalk involved in the interaction of the elongation factors with the ribosome during protein synthesis. The phosphopantetheinylated form is part of the 10S triacylglycerol biosynthetic complex involved in de novo fatty acid biosynthesis. In terms of processing, 4'-phosphopantetheine is transferred from CoA to a specific serine by acpS. This modification is essential for activity because fatty acids are bound in thioester linkage to the sulfhydryl of the prosthetic group.

The protein resides in the cytoplasm. Its function is as follows. Probable bifunctional protein. The phosphorylated protein plays an important role in the elongation step of protein synthesis. The phosphopantetheinylated protein acts as an acyl carrier protein. The protein is Large ribosomal subunit protein P2 of Rhodotorula glutinis (Yeast).